The sequence spans 287 residues: Neuferricin homolog (287 aa).

The signal sequence occupies residues 1 to 22 (MFGLLRHLFKFQFLFVVAAVLG). One can recognise a Cytochrome b5 heme-binding domain in the interval 61–146 (GTLFTPAELA…KPDDLIGLAG (86 aa)). The stretch at 175–204 (YHHKFLELLEQARDAKRQVEELRARYPGCN) forms a coiled coil.

This sequence belongs to the cytochrome b5 family. MAPR subfamily.

The protein localises to the secreted. Its function is as follows. Heme-binding protein. The sequence is that of Neuferricin homolog from Drosophila melanogaster (Fruit fly).